We begin with the raw amino-acid sequence, 906 residues long: Glutamate receptor 1 (906 aa).

An N-terminal signal peptide occupies residues 1–18 (MQHIFAFFCTGFLGAVVG). The Extracellular portion of the chain corresponds to 19-536 (ANFPNNIQIG…GVFSFLDPLA (518 aa)). Asn63, Asn249, Asn257, Asn363, Asn401, and Asn406 each carry an N-linked (GlcNAc...) asparagine glycan. Cysteines 75 and 323 form a disulfide. Pro492, Thr494, and Arg499 together coordinate L-glutamate. Residues 537–557 (YEIWMCIVFAYIGVSVVLFLV) traverse the membrane as a helical segment. Over 558–584 (SRFSPYEWHSEEFEEGRDQTTSDQSNE) the chain is Cytoplasmic. The segment at residues 585 to 600 (FGIFNSLWFSLGAFMQ) is an intramembrane region (helical; Pore-forming). An intramembrane segment occupies 601–603 (QGC). Residue Cys603 is the site of S-palmitoyl cysteine attachment. Residues 604–609 (DISPRS) lie on the Cytoplasmic side of the membrane. A helical membrane pass occupies residues 610–630 (LSGRIVGGVWWFFTLIIISSY). Residues 631-805 (TANLAAFLTV…DKTSALSLSN (175 aa)) lie on the Extracellular side of the membrane. Ser645 is modified (phosphoserine). The L-glutamate site is built by Ser668 and Thr669. The residue at position 710 (Ser710) is a Phosphoserine. Glu719 contacts L-glutamate. The cysteines at positions 732 and 787 are disulfide-linked. A helical transmembrane segment spans residues 806 to 826 (VAGVFYILIGGLGLAMLVALI). Residues 827–906 (EFCYKSRSES…SGMPLGATGL (80 aa)) lie on the Cytoplasmic side of the membrane. A lipid anchor (S-palmitoyl cysteine) is attached at Cys829. A phosphoserine mark is found at Ser849 and Ser863. Residues 861 to 880 (RNSGAGASSGGSGENGRVVS) form a disordered region. Residues 903–906 (ATGL) carry the PDZ-binding motif.

This sequence belongs to the glutamate-gated ion channel (TC 1.A.10.1) family. GRIA1 subfamily. Homotetramer or heterotetramer of pore-forming glutamate receptor subunits; heteromeric assembly can be the result of both receptor subtype and flip or flop form and according the composition, one partner can be dominant with respect to the fast desensitizing current component, whereas the other can determine the steady-state component. Tetramers may be formed by the dimerization of dimers. Found in a complex with GRIA2, GRIA3, GRIA4, CNIH2, CNIH3, CACNG2, CACNG3, CACNG4, CACNG5, CACNG7 and CACNG8. Interacts with HIP1 and RASGRF2. Interacts with SYNDIG1 and GRIA2. Interacts with DLG1 (via C-terminus). Interacts with LRFN1. Interacts with PRKG2. Interacts with CNIH2 and CACNG2. Interacts with CACNG5; this interaction modulates the gating. Interacts (via C-terminus) with PDLIM4 (via LIM domain); this interaction as well as the interaction of PDLIM4 with alpha-actinin is required for their colocalization in early endosomes. Interacts with SNX27 (via PDZ domain); the interaction is required for recycling to the plasma membrane when endocytosed and prevent degradation in lysosomes. Interacts (via PDZ-binding motif) with SHANK3 (via PDZ domain). Interacts with CACNG3; associates GRIA1 with the adapter protein complex 4 (AP-4) to target GRIA1 to the somatodendritic compartment of neurons. Interacts with CACNG2; this interaction mediates traffick to the plasma membrane and modulation of desensitization. Interacts with CNIH2 and CNIH3; this interaction promotes expression at the plasma membrane and extensively modulates their gating properties by slowing deactivation and desensitization kinetics. Found in a complex with GRIA2, GRIA3, GRIA4, DLG4, CACNG8 and CNIH2. Palmitoylated. Depalmitoylated by CPT1C and upon L-glutamate stimulation. ZDHHC3/GODZ specifically palmitoylates Cys-603, which leads to Golgi retention and decreased cell surface expression. In contrast, Cys-829 palmitoylation does not affect cell surface expression but regulates stimulation-dependent endocytosis. Post-translationally, phosphorylated at Ser-645. Phosphorylated at Ser-710 by PKC. Phosphorylated at Ser-849 by PKC, PKA and CAMK2. Phosphorylated at Ser-863 by PKC, PKA and PRKG2. Phosphorylation of Ser-863 is reduced by induction of long-term depression and increased by induction of long-term potentiation. In terms of tissue distribution, widely expressed in brain.

It localises to the cell membrane. The protein localises to the endoplasmic reticulum membrane. It is found in the postsynaptic cell membrane. Its subcellular location is the postsynaptic density membrane. The protein resides in the cell projection. It localises to the dendrite. The protein localises to the dendritic spine. It is found in the early endosome membrane. Its subcellular location is the recycling endosome membrane. The protein resides in the presynapse. It localises to the synapse. The enzyme catalyses Ca(2+)(in) = Ca(2+)(out). It catalyses the reaction Na(+)(in) = Na(+)(out). The catalysed reaction is Mg(2+)(in) = Mg(2+)(out). It carries out the reaction Li(+)(in) = Li(+)(out). The enzyme catalyses K(+)(in) = K(+)(out). It catalyses the reaction Sr(2+)(in) = Sr(2+)(out). Ionotropic glutamate receptor that functions as a ligand-gated cation channel, gated by L-glutamate and glutamatergic agonists such as alpha-amino-3-hydroxy-5-methyl-4-isoxazolepropionic acid (AMPA), quisqualic acid, and kainic acid. L-glutamate acts as an excitatory neurotransmitter at many synapses in the central nervous system. Binding of the excitatory neurotransmitter L-glutamate induces a conformation change, leading to the opening of the cation channel, and thereby converts the chemical signal to an electrical impulse upon entry of monovalent and divalent cations such as sodium and calcium. The receptor then desensitizes rapidly and enters in a transient inactive state, characterized by the presence of bound agonist. In the presence of CACNG2 or CACNG4 or CACNG7 or CACNG8, shows resensitization which is characterized by a delayed accumulation of current flux upon continued application of L-glutamate. Resensitization is blocked by CNIH2 through interaction with CACNG8 in the CACNG8-containing AMPA receptors complex. Calcium (Ca(2+)) permeability depends on subunits composition and, heteromeric channels containing edited GRIA2 subunit are calcium-impermeable. Also permeable to other divalents cations such as strontium(2+) and magnesium(2+) and monovalent cations such as potassium(1+) and lithium(1+). The protein is Glutamate receptor 1 of Homo sapiens (Human).